The primary structure comprises 709 residues: Polyribonucleotide nucleotidyltransferase (709 aa).

Residues D489 and D495 each coordinate Mg(2+). A KH domain is found at 556–615 (PKIDMIKIDVDKIKVVIGKGGETIDKIIAETGVKIDIDEEGNVSIFSSDQAAIDRTKDII). The S1 motif domain occupies 625 to 693 (GEVYHAKVVR…DKGRVDASMK (69 aa)).

The protein belongs to the polyribonucleotide nucleotidyltransferase family. Requires Mg(2+) as cofactor.

Its subcellular location is the cytoplasm. It carries out the reaction RNA(n+1) + phosphate = RNA(n) + a ribonucleoside 5'-diphosphate. In terms of biological role, involved in mRNA degradation. Catalyzes the phosphorolysis of single-stranded polyribonucleotides processively in the 3'- to 5'-direction. The protein is Polyribonucleotide nucleotidyltransferase of Streptococcus agalactiae serotype III (strain NEM316).